A 500-amino-acid polypeptide reads, in one-letter code: Cobyric acid synthase (500 aa).

The 190-residue stretch at 255-444 (AIDIAVIRCP…MHDLFHNDAF (190 aa)) folds into the GATase cobBQ-type domain. Cysteine 337 functions as the Nucleophile in the catalytic mechanism. Histidine 436 is a catalytic residue.

This sequence belongs to the CobB/CobQ family. CobQ subfamily.

Its pathway is cofactor biosynthesis; adenosylcobalamin biosynthesis. In terms of biological role, catalyzes amidations at positions B, D, E, and G on adenosylcobyrinic A,C-diamide. NH(2) groups are provided by glutamine, and one molecule of ATP is hydrogenolyzed for each amidation. The sequence is that of Cobyric acid synthase from Geobacillus thermodenitrificans (strain NG80-2).